The sequence spans 351 residues: Fe(3+) ions import ATP-binding protein FbpC (351 aa).

The ABC transporter domain occupies 7–241 (LTVKNLNKFF…PNHLETAKFM (235 aa)). Residue 39–46 (GASGCGKT) coordinates ATP.

The protein belongs to the ABC transporter superfamily. Fe(3+) ion importer (TC 3.A.1.10) family. As to quaternary structure, the complex is composed of two ATP-binding proteins (FbpC), two transmembrane proteins (FbpB) and a solute-binding protein (FbpA).

The protein resides in the cell inner membrane. The catalysed reaction is Fe(3+)(out) + ATP + H2O = Fe(3+)(in) + ADP + phosphate + H(+). Its function is as follows. Part of the ABC transporter complex FbpABC involved in Fe(3+) ions import. Responsible for energy coupling to the transport system. This chain is Fe(3+) ions import ATP-binding protein FbpC, found in Haemophilus influenzae (strain 86-028NP).